Reading from the N-terminus, the 216-residue chain is NADH-quinone oxidoreductase subunit C (216 aa).

The protein belongs to the complex I 30 kDa subunit family. NDH-1 is composed of 14 different subunits. Subunits NuoB, C, D, E, F, and G constitute the peripheral sector of the complex.

It is found in the cell inner membrane. It carries out the reaction a quinone + NADH + 5 H(+)(in) = a quinol + NAD(+) + 4 H(+)(out). Its function is as follows. NDH-1 shuttles electrons from NADH, via FMN and iron-sulfur (Fe-S) centers, to quinones in the respiratory chain. The immediate electron acceptor for the enzyme in this species is believed to be ubiquinone. Couples the redox reaction to proton translocation (for every two electrons transferred, four hydrogen ions are translocated across the cytoplasmic membrane), and thus conserves the redox energy in a proton gradient. This is NADH-quinone oxidoreductase subunit C from Francisella tularensis subsp. holarctica (strain OSU18).